Reading from the N-terminus, the 455-residue chain is Trigger factor (455 aa).

The region spanning 169–262 (GDVAIVDYEG…VKELKAKELP (94 aa)) is the PPIase FKBP-type domain.

Belongs to the FKBP-type PPIase family. Tig subfamily.

The protein localises to the cytoplasm. It carries out the reaction [protein]-peptidylproline (omega=180) = [protein]-peptidylproline (omega=0). In terms of biological role, involved in protein export. Acts as a chaperone by maintaining the newly synthesized protein in an open conformation. Functions as a peptidyl-prolyl cis-trans isomerase. The polypeptide is Trigger factor (Rippkaea orientalis (strain PCC 8801 / RF-1) (Cyanothece sp. (strain PCC 8801))).